The chain runs to 179 residues: ATP synthase subunit delta (179 aa).

It belongs to the ATPase delta chain family. In terms of assembly, F-type ATPases have 2 components, F(1) - the catalytic core - and F(0) - the membrane proton channel. F(1) has five subunits: alpha(3), beta(3), gamma(1), delta(1), epsilon(1). F(0) has three main subunits: a(1), b(2) and c(10-14). The alpha and beta chains form an alternating ring which encloses part of the gamma chain. F(1) is attached to F(0) by a central stalk formed by the gamma and epsilon chains, while a peripheral stalk is formed by the delta and b chains.

The protein resides in the cell membrane. F(1)F(0) ATP synthase produces ATP from ADP in the presence of a proton or sodium gradient. F-type ATPases consist of two structural domains, F(1) containing the extramembraneous catalytic core and F(0) containing the membrane proton channel, linked together by a central stalk and a peripheral stalk. During catalysis, ATP synthesis in the catalytic domain of F(1) is coupled via a rotary mechanism of the central stalk subunits to proton translocation. Its function is as follows. This protein is part of the stalk that links CF(0) to CF(1). It either transmits conformational changes from CF(0) to CF(1) or is implicated in proton conduction. The protein is ATP synthase subunit delta of Clostridium botulinum (strain Alaska E43 / Type E3).